Consider the following 606-residue polypeptide: Urocanate reductase (606 aa).

A signal peptide (tat-type signal) is located at residues M1 to A40. T111 carries the post-translational modification FMN phosphoryl threonine. FAD is bound by residues A163, E182, T191, G195, G196, A197, A305, and D373. The active-site Proton donor is the R433. Positions 572 and 588 each coordinate FAD.

Belongs to the FAD-dependent oxidoreductase 2 family. FRD/SDH subfamily. It depends on FAD as a cofactor. FMN serves as cofactor. Post-translationally, predicted to be exported by the Tat system. The position of the signal peptide cleavage has not been experimentally proven.

It carries out the reaction dihydrourocanate + A = urocanate + AH2. Catalyzes the two-electron reduction of urocanate to dihydrourocanate (also named imidazole propionate or deamino-histidine). Dihydrourocanate is present at higher concentrations in subjects with type 2 diabetes, and directly impairs glucose tolerance and insulin signaling at the level of insulin receptor substrate (IRS) through activation of p38 gamma (MAPK12)-p62-mTORC1. Therefore, the UrdA enzyme from the gut bacteria E.lenta strain DSM 2243 may contribute to the pathogenesis of type 2 diabetes by producing the microbial metabolite dihydrourocanate. This chain is Urocanate reductase, found in Eggerthella lenta (strain ATCC 25559 / DSM 2243 / CCUG 17323 / JCM 9979 / KCTC 3265 / NCTC 11813 / VPI 0255 / 1899 B) (Eubacterium lentum).